The primary structure comprises 263 residues: Endonuclease 8 (263 aa).

Catalysis depends on P2, which acts as the Schiff-base intermediate with DNA. The active-site Proton donor is E3. The active-site Proton donor; for beta-elimination activity is the K53. DNA contacts are provided by Q70, R125, and N169. An FPG-type zinc finger spans residues 229 to 263; it reads KVFHRDGELCERCGGIIEKTTLSSRPFYWCPGCQH. The Proton donor; for delta-elimination activity role is filled by R253.

The protein belongs to the FPG family. The cofactor is Zn(2+).

It carries out the reaction 2'-deoxyribonucleotide-(2'-deoxyribose 5'-phosphate)-2'-deoxyribonucleotide-DNA = a 3'-end 2'-deoxyribonucleotide-(2,3-dehydro-2,3-deoxyribose 5'-phosphate)-DNA + a 5'-end 5'-phospho-2'-deoxyribonucleoside-DNA + H(+). Functionally, involved in base excision repair of DNA damaged by oxidation or by mutagenic agents. Acts as a DNA glycosylase that recognizes and removes damaged bases. Has a preference for oxidized pyrimidines, such as thymine glycol, 5,6-dihydrouracil and 5,6-dihydrothymine. Has AP (apurinic/apyrimidinic) lyase activity and introduces nicks in the DNA strand. Cleaves the DNA backbone by beta-delta elimination to generate a single-strand break at the site of the removed base with both 3'- and 5'-phosphates. This Shigella flexneri serotype 5b (strain 8401) protein is Endonuclease 8.